Here is a 92-residue protein sequence, read N- to C-terminus: Small ribosomal subunit protein uS19 (92 aa).

It belongs to the universal ribosomal protein uS19 family.

Functionally, protein S19 forms a complex with S13 that binds strongly to the 16S ribosomal RNA. The polypeptide is Small ribosomal subunit protein uS19 (Anoxybacillus flavithermus (strain DSM 21510 / WK1)).